The sequence spans 632 residues: Golgin subfamily A member 8N (632 aa).

Positions 1 to 76 (MAEETQHNKL…TSSATLKDLE (76 aa)) are disordered. The span at 38–50 (TNGSIPETATSGG) shows a compositional bias: polar residues. Coiled-coil stretches lie at residues 85 to 150 (VLDS…TDLY) and 209 to 421 (ELEQ…SLMA). 3 disordered regions span residues 423 to 445 (PGEG…PMPS), 505 to 524 (DAAL…DEGE), and 552 to 573 (NSAD…ADKH). Residues 508 to 520 (LGGGHHQAGAQGG) show a composition bias toward gly residues.

The protein belongs to the GOLGA8 family.

This Homo sapiens (Human) protein is Golgin subfamily A member 8N.